A 328-amino-acid polypeptide reads, in one-letter code: tRNA uridine(34) hydroxylase (328 aa).

One can recognise a Rhodanese domain in the interval 130-224; it reads LDKDTVVLDT…YGKDPEVQGE (95 aa). The active-site Cysteine persulfide intermediate is the Cys184.

It belongs to the TrhO family.

It catalyses the reaction uridine(34) in tRNA + AH2 + O2 = 5-hydroxyuridine(34) in tRNA + A + H2O. Its function is as follows. Catalyzes oxygen-dependent 5-hydroxyuridine (ho5U) modification at position 34 in tRNAs. The polypeptide is tRNA uridine(34) hydroxylase (Streptococcus pneumoniae (strain Taiwan19F-14)).